The chain runs to 379 residues: Inactive 2'-5'-oligoadenylate synthase 1B (379 aa).

At 1 to 355 (MEQELRSIPA…VPTEVDIPSQ (355 aa)) the chain is on the cytoplasmic side. A helical; Anchor for type IV membrane protein membrane pass occupies residues 356 to 374 (NYFFHIICLIFWLLLRLIF). At 375–379 (GKHSV) the chain is on the extracellular side.

It belongs to the 2-5A synthase family. Interacts with OSBPL1A and ABCF3. As to expression, highly expressed in the brain, liver, spleen and heart.

Its subcellular location is the endoplasmic reticulum membrane. Functionally, does not have 2'-5'-OAS activity, but can bind double-stranded RNA. Displays antiviral activity against viruses via an alternative antiviral pathway independent of RNase L. This Rattus norvegicus (Rat) protein is Inactive 2'-5'-oligoadenylate synthase 1B (Oas1b).